We begin with the raw amino-acid sequence, 411 residues long: Citrate synthase (411 aa).

Residues H304 and D363 contribute to the active site.

It belongs to the citrate synthase family.

It catalyses the reaction oxaloacetate + acetyl-CoA + H2O = citrate + CoA + H(+). Its pathway is carbohydrate metabolism; tricarboxylic acid cycle; isocitrate from oxaloacetate: step 1/2. This Rickettsia australis protein is Citrate synthase (gltA).